A 202-amino-acid polypeptide reads, in one-letter code: Protein Thf1 (202 aa).

Residues 174 to 202 (IYKSSILKMEQAKELLQEAKIKDKKEKKK) are a coiled coil.

Belongs to the THF1 family.

May be involved in photosynthetic membrane biogenesis. In Prochlorococcus marinus subsp. pastoris (strain CCMP1986 / NIES-2087 / MED4), this protein is Protein Thf1.